The sequence spans 103 residues: Small ribosomal subunit protein uS10 (103 aa).

This sequence belongs to the universal ribosomal protein uS10 family. In terms of assembly, part of the 30S ribosomal subunit.

In terms of biological role, involved in the binding of tRNA to the ribosomes. The sequence is that of Small ribosomal subunit protein uS10 from Pseudoalteromonas atlantica (strain T6c / ATCC BAA-1087).